We begin with the raw amino-acid sequence, 64 residues long: Large ribosomal subunit protein bL32 (64 aa).

Residues 1–35 form a disordered region; that stretch reads MAVQKSRVTPSRRGQRRSHDALTAKQLSTDPTSGE.

Belongs to the bacterial ribosomal protein bL32 family.

This chain is Large ribosomal subunit protein bL32, found in Xanthomonas axonopodis pv. citri (strain 306).